Reading from the N-terminus, the 31-residue chain is Glucagon-5 (31 aa).

This sequence belongs to the glucagon family.

Its subcellular location is the secreted. Glucagon plays a key role in glucose metabolism and homeostasis. Regulates blood glucose by increasing gluconeogenesis and decreasing glycolysis. The protein is Glucagon-5 of Huso dauricus (Kaluga sturgeon).